The following is a 2869-amino-acid chain: uncharacterized protein (2869 aa).

The span at 1 to 10 (MNINRNNIND) shows a compositional bias: low complexity. Disordered regions lie at residues 1–132 (MNIN…SSNK), 171–349 (NNNN…DNYR), 380–485 (FNES…TSSS), 498–517 (KEKH…KPKK), 690–812 (NQNQ…NQNQ), 860–1074 (INNN…INSN), 1108–1175 (INNI…NSNS), 1188–1216 (SNSN…VDVD), 1224–1243 (VFIV…SVKT), 1340–1448 (ESNS…GNNI), 1476–1704 (IDNC…SNYY), 1731–1832 (NSNS…NEGF), and 2725–2773 (DRVR…NNNE). The span at 14 to 25 (HSTSFNDNFDSF) shows a compositional bias: polar residues. Low complexity-rich tracts occupy residues 26 to 124 (GNQN…NPKN), 171 to 348 (NNNN…YDNY), 388 to 414 (NNNT…LNNN), 421 to 446 (YYDN…QTNK), and 454 to 478 (KNNN…NSNN). Residues 505 to 514 (HENGDISESK) are compositionally biased toward basic and acidic residues. Low complexity-rich tracts occupy residues 690-707 (NQNQ…QNHQ) and 714-749 (PQRQ…NQDQ). Over residues 750-763 (YQDHDHEHEHDHDQ) the composition is skewed to basic and acidic residues. A compositionally biased stretch (low complexity) spans 764–781 (NQNQNQNQHQSRNQNQDQ). The span at 782–795 (YQDHDHEHEHDHDQ) shows a compositional bias: basic and acidic residues. 5 stretches are compositionally biased toward low complexity: residues 796–812 (NQNQ…NQNQ), 860–891 (INNN…QSQN), 898–911 (DNRI…SSRD), 921–991 (CDFN…SFNN), and 1000–1074 (NNHN…INSN). A compositionally biased stretch (low complexity) spans 1188–1212 (SNSNGFNNNNSNDQRNIDSSSNSDI). Over residues 1230–1243 (TSSNKSNRASSVKT) the composition is skewed to polar residues. 2 stretches are compositionally biased toward low complexity: residues 1377–1448 (DNGN…GNNI) and 1476–1639 (IDNC…NDND). A compositionally biased stretch (acidic residues) spans 1640–1659 (IGNDFDNDNDNDSYIDDDNN). Composition is skewed to low complexity over residues 1660–1704 (VYDN…SNYY), 1731–1823 (NSNS…NNNS), and 2739–2754 (SSSG…SGGS). The span at 2758-2773 (NLDDSENESDSENNNE) shows a compositional bias: acidic residues.

This is an uncharacterized protein from Dictyostelium discoideum (Social amoeba).